The chain runs to 496 residues: Rhamnulokinase (496 aa).

13–17 (ASSGR) is a binding site for ATP. Substrate-binding positions include G83 and 236-238 (HDT). D237 serves as the catalytic Proton acceptor. T259 contributes to the ATP binding site. N296 serves as a coordination point for substrate. Residue Q304 coordinates ATP. A disulfide bridge connects residues C353 and C370. An ATP-binding site is contributed by G402. C413 and C417 form a disulfide bridge.

This sequence belongs to the rhamnulokinase family. It depends on Mg(2+) as a cofactor.

It carries out the reaction L-rhamnulose + ATP = L-rhamnulose 1-phosphate + ADP + H(+). It functions in the pathway carbohydrate degradation; L-rhamnose degradation; glycerone phosphate from L-rhamnose: step 2/3. Functionally, involved in the catabolism of L-rhamnose (6-deoxy-L-mannose). Catalyzes the transfer of the gamma-phosphate group from ATP to the 1-hydroxyl group of L-rhamnulose to yield L-rhamnulose 1-phosphate. This Pectobacterium carotovorum subsp. carotovorum (strain PC1) protein is Rhamnulokinase.